Here is a 271-residue protein sequence, read N- to C-terminus: 3'-phosphoadenosine 5'-phosphate phosphatase (271 aa).

The Mg(2+) site is built by Glu-73, Asp-91, Leu-93, Asp-94, and Asp-216. Glu-73 contacts substrate. Substrate contacts are provided by residues 93–96 (LDGT) and Asp-216.

It belongs to the inositol monophosphatase superfamily. Homodimer. It depends on Mg(2+) as a cofactor.

It catalyses the reaction adenosine 3',5'-bisphosphate + H2O = AMP + phosphate. The catalysed reaction is beta-D-fructose 1,6-bisphosphate + H2O = beta-D-fructose 6-phosphate + phosphate. The enzyme catalyses a myo-inositol phosphate + H2O = myo-inositol + phosphate. It participates in sulfur metabolism; sulfate assimilation. In terms of biological role, phosphatase with a broad specificity. Its primary physiological function is to dephosphorylate 3'-phosphoadenosine 5'-phosphate (PAP) and 3'-phosphoadenosine 5'-phosphosulfate (PAPS). Thus, plays a role in mycobacterial sulfur metabolism, since it can serve as a key regulator of the sulfate assimilation pathway by controlling the pools of PAP and PAPS in the cell. To a lesser extent, is also able to hydrolyze inositol 1-phosphate (I-1-P), fructose 1,6-bisphosphate (FBP) (to fructose 6-phosphate (F-6-P)) and AMP in vitro, but this might not be significant in vivo. The protein is 3'-phosphoadenosine 5'-phosphate phosphatase (cysQ) of Mycobacterium leprae (strain TN).